Consider the following 173-residue polypeptide: Photosystem I assembly protein Ycf3 (173 aa).

TPR repeat units follow at residues 35 to 68 (AFAYYRDGMSAQADGEYAEALENYQAALELEEDP), 72 to 105 (SYILYNIGLIHASNGEHEKALEYYHQALELNPRM), and 113 to 146 (AVIYHYLGTQAEEQQRLEEAEQFFDRAADYWKRA).

The protein belongs to the Ycf3 family.

Its subcellular location is the cellular thylakoid membrane. In terms of biological role, essential for the assembly of the photosystem I (PSI) complex. May act as a chaperone-like factor to guide the assembly of the PSI subunits. The sequence is that of Photosystem I assembly protein Ycf3 from Thermosynechococcus vestitus (strain NIES-2133 / IAM M-273 / BP-1).